The following is a 216-amino-acid chain: MTNIISVDTLLSASKLTCIREERILFDELSFEINAGDIVQIEGPNGAGKTSLLRILAGLSRPYAGQTFYVNEDINRCRDEYNEDLLYLGHLAGVKSELTAEENLNFNLRISGYDDFDTSAILAKVNLSGFEEALAGHLSAGQHRRTALARLWHNDCKIWILDEPFTAIDKRGVEELEQLFIKHADNGGCVILTTHQDMGIIKDDRLRKIRLDYRFV.

Residues 5 to 216 form the ABC transporter domain; the sequence is ISVDTLLSAS…RKIRLDYRFV (212 aa). An ATP-binding site is contributed by 43–50; sequence GPNGAGKT.

This sequence belongs to the ABC transporter superfamily. CcmA exporter (TC 3.A.1.107) family. In terms of assembly, the complex is composed of two ATP-binding proteins (CcmA) and two transmembrane proteins (CcmB).

It is found in the cell inner membrane. The catalysed reaction is heme b(in) + ATP + H2O = heme b(out) + ADP + phosphate + H(+). Its function is as follows. Part of the ABC transporter complex CcmAB involved in the biogenesis of c-type cytochromes; once thought to export heme, this seems not to be the case, but its exact role is uncertain. Responsible for energy coupling to the transport system. This Shewanella oneidensis (strain ATCC 700550 / JCM 31522 / CIP 106686 / LMG 19005 / NCIMB 14063 / MR-1) protein is Cytochrome c biogenesis ATP-binding export protein CcmA.